The chain runs to 3332 residues: Nonribosomal peptide synthetase imqB (3332 aa).

Residues 230–622 (FSEQVKAHPG…IGRKDTQVKV (393 aa)) are adenylation 1. In terms of domain architecture, Carrier 1 spans 764-846 (GRITPQEKLL…DMARCITRVD (83 aa)). Ser-801 is subject to O-(pantetheine 4'-phosphoryl)serine. The condensation 1 stretch occupies residues 886–1314 (DIYPCTPLQE…NCLTRKELHQ (429 aa)). Residues 1336–1740 (EVSNTRPTAP…GRKDRQLKVR (405 aa)) form an adenylation 2 region. Residues 1880–1954 (AIATPKEEKL…EMAEKAAETG (75 aa)) enclose the Carrier 2 domain. At Ser-1915 the chain carries O-(pantetheine 4'-phosphoryl)serine. The interval 1992-2402 (EDIYPCTPLQ…CLSEIDTQQI (411 aa)) is condensation 2. An adenylation 3 region spans residues 2422 to 2819 (AQQAREHPAT…GRKDTQVKIR (398 aa)). Positions 2963 to 3039 (EVATNDEAAV…DLASRIGRVE (77 aa)) constitute a Carrier 3 domain. Ser-3000 bears the O-(pantetheine 4'-phosphoryl)serine mark. The interval 3058-3323 (SSNPTLIQGQ…ETTRHIRDFC (266 aa)) is thioesterase (TE) domain.

The protein belongs to the NRP synthetase family.

Its pathway is secondary metabolite biosynthesis. Its function is as follows. Nonribosomal peptide synthetase; part of the gene cluster that mediates the biosynthesis of imizoquins A to D, tripeptide-derived alkaloids that serve a protective role against oxidative stress that are essential for normal germination. ImqB is a canonical three-module NRPS that assembles the tripeptide backbone of the imizoquins via condensation of Trp, Tyr, and Leu-derived precursors. N-methylation by imqF and phenol oxidation by imqC, followed by cyclization via the FAD-dependent oxidase imqH carry out the three-step transformation of L-tyrosine into tetrahydroisoquinoline. Importantly, this sequence requires the presence of a free amine in the tyrosine moiety, indicating that isoquinoline formation occurs prior to peptide bond formation. The imidazolidin-4-one ring of imizoquins could form following additional oxidation of the methyl-derived bridgehead carbon by imqH. Lastly, O-methylation by imqG and leucine hydroxylation by imqE complete biosynthesis of the imizoquins. In Aspergillus flavus (strain ATCC 200026 / FGSC A1120 / IAM 13836 / NRRL 3357 / JCM 12722 / SRRC 167), this protein is Nonribosomal peptide synthetase imqB.